The sequence spans 113 residues: Hydrogenase maturation factor HypA (113 aa).

His2 is a Ni(2+) binding site. Zn(2+) is bound by residues Cys73, Cys76, Cys89, and Cys92.

The protein belongs to the HypA/HybF family.

Involved in the maturation of [NiFe] hydrogenases. Required for nickel insertion into the metal center of the hydrogenase. This Dechloromonas aromatica (strain RCB) protein is Hydrogenase maturation factor HypA.